The chain runs to 360 residues: Aspartate beta-hydroxylase domain-containing protein 1 (360 aa).

Over 1-45 (MWKGGNQEAVIEGSGGELGVPGSWGLQDAACHLARASLPIMFPWP) the chain is Cytoplasmic. A helical membrane pass occupies residues 46 to 68 (LPLGSSALTMLLGALTSLFLWYC). Residues 69–360 (YRLGSQDMQA…ALDFVFAPDP (292 aa)) lie on the Lumenal side of the membrane.

The protein belongs to the aspartyl/asparaginyl beta-hydroxylase family.

It is found in the membrane. The chain is Aspartate beta-hydroxylase domain-containing protein 1 (Asphd1) from Mus musculus (Mouse).